Consider the following 154-residue polypeptide: Ribosomal RNA large subunit methyltransferase H (154 aa).

Glycine 102 is a binding site for S-adenosyl-L-methionine.

The protein belongs to the RNA methyltransferase RlmH family. Homodimer.

Its subcellular location is the cytoplasm. It catalyses the reaction pseudouridine(1915) in 23S rRNA + S-adenosyl-L-methionine = N(3)-methylpseudouridine(1915) in 23S rRNA + S-adenosyl-L-homocysteine + H(+). In terms of biological role, specifically methylates the pseudouridine at position 1915 (m3Psi1915) in 23S rRNA. The protein is Ribosomal RNA large subunit methyltransferase H of Phenylobacterium zucineum (strain HLK1).